Here is a 962-residue protein sequence, read N- to C-terminus: Putative primase C962R (962 aa).

An SF3 helicase domain is found at 607-775 (ELDARLWIMF…PDPNNSYEKK (169 aa)). 636 to 643 (GGGCNGKT) is an ATP binding site.

The protein belongs to the asfivirus helicase C962R family.

The protein is Putative primase C962R of African swine fever virus (isolate Warthog/Namibia/Wart80/1980) (ASFV).